A 200-amino-acid chain; its full sequence is uncharacterized protein (200 aa).

2 stretches are compositionally biased toward low complexity: residues 1 to 13 and 28 to 44; these read MTSAETASRAAES and PSPAAPSRPGAPAAGPR. 2 disordered regions span residues 1–116 and 137–200; these read MTSA…GGPG and LPRD…SSFF. Positions 88 to 102 are enriched in basic residues; that stretch reads RCGRPRRRDPRRRRT. Residues 189 to 200 show a composition bias toward low complexity; that stretch reads PSSSSGLLSSFF.

This is an uncharacterized protein from Homo sapiens (Human).